We begin with the raw amino-acid sequence, 1309 residues long: Mediator of RNA polymerase II transcription subunit 33A (1309 aa).

The segment at 809-829 is disordered; that stretch reads QTLNPVNSGTSSSSGAASEDS. A compositionally biased stretch (low complexity) spans 816-826; it reads SGTSSSSGAAS.

Belongs to the Mediator complex subunit 33 family. Component of the Mediator complex.

Its subcellular location is the nucleus. Component of the Mediator complex, a coactivator involved in the regulated transcription of nearly all RNA polymerase II-dependent genes. Mediator functions as a bridge to convey information from gene-specific regulatory proteins to the basal RNA polymerase II transcription machinery. The Mediator complex, having a compact conformation in its free form, is recruited to promoters by direct interactions with regulatory proteins and serves for the assembly of a functional preinitiation complex with RNA polymerase II and the general transcription factors. Involved in the repression of phenylpropanoid biosynthesis. May compete with MED33B for common binding partners or for occupancy in Mediator. The chain is Mediator of RNA polymerase II transcription subunit 33A (MED33A) from Arabidopsis thaliana (Mouse-ear cress).